The primary structure comprises 173 residues: MKKNRLLFRVIILLILCGAVGFTLYQGYFTKEEKMEIGKEAPNFVVTDLEGKKIELKDFKGKGVFLNFWGTWCKPCEKEMPYMNELYPKYKEKGVEIIALDADETDIAVKNFVKQYDLKFPVAIDKGGEIIKTYGVIPLPTSFLIDKDGKVIQEIKGEQTKEQLEEYLKKITP.

Residues 10-29 (VIILLILCGAVGFTLYQGYF) form a helical; Signal-anchor for type II membrane protein membrane-spanning segment. The region spanning 35-173 (MEIGKEAPNF…LEEYLKKITP (139 aa)) is the Thioredoxin domain. An intrachain disulfide couples Cys-73 to Cys-76.

It belongs to the thioredoxin family. ResA subfamily.

It is found in the cell membrane. Its pathway is protein modification; cytochrome c assembly. Its function is as follows. Thiol-disulfide oxidoreductase which is required in disulfide reduction during c-type cytochrome synthesis. May accept reducing equivalents from CcdA, leading to breakage of disulfide bonds in apocytochrome c; following this reduction heme can be covalently attached. The polypeptide is Thiol-disulfide oxidoreductase ResA (Bacillus thuringiensis subsp. konkukian (strain 97-27)).